The following is a 223-amino-acid chain: N-terminal Xaa-Pro-Lys N-methyltransferase 1-B (223 aa).

Residues Gly69, Arg74, Asp91–Thr93, Leu119–Gln120, and Gln135 each bind S-adenosyl-L-methionine.

This sequence belongs to the methyltransferase superfamily. NTM1 family.

The protein resides in the nucleus. It carries out the reaction N-terminal L-alanyl-L-prolyl-L-lysyl-[protein] + 3 S-adenosyl-L-methionine = N-terminal N,N,N-trimethyl-L-alanyl-L-prolyl-L-lysyl-[protein] + 3 S-adenosyl-L-homocysteine + 3 H(+). It catalyses the reaction N-terminal L-seryl-L-prolyl-L-lysyl-[protein] + 3 S-adenosyl-L-methionine = N-terminal N,N,N-trimethyl-L-seryl-L-prolyl-L-lysyl-[protein] + 3 S-adenosyl-L-homocysteine + 3 H(+). The enzyme catalyses N-terminal L-prolyl-L-prolyl-L-lysyl-[protein] + 2 S-adenosyl-L-methionine = N-terminal N,N-dimethyl-L-prolyl-L-prolyl-L-lysyl-[protein] + 2 S-adenosyl-L-homocysteine + 2 H(+). Distributive alpha-N-methyltransferase that methylates the N-terminus of target proteins containing the N-terminal motif [Ala/Gly/Pro/Ser]-Pro-Lys when the initiator Met is cleaved. Specifically catalyzes mono-, di- or tri-methylation of the exposed alpha-amino group of the Ala, Gly or Ser residue in the [Ala/Gly/Ser]-Pro-Lys motif and mono- or di-methylation of Pro in the Pro-Pro-Lys motif. Required during mitosis for normal bipolar spindle formation and chromosome segregation via its action on target proteins. The protein is N-terminal Xaa-Pro-Lys N-methyltransferase 1-B (ntmt1-b) of Xenopus laevis (African clawed frog).